We begin with the raw amino-acid sequence, 701 residues long: Elongation factor G (701 aa).

The 277-residue stretch at serine 11 to leucine 287 folds into the tr-type G domain. GTP-binding positions include alanine 20–threonine 27, aspartate 84–histidine 88, and asparagine 138–aspartate 141.

The protein belongs to the TRAFAC class translation factor GTPase superfamily. Classic translation factor GTPase family. EF-G/EF-2 subfamily.

The protein resides in the cytoplasm. In terms of biological role, catalyzes the GTP-dependent ribosomal translocation step during translation elongation. During this step, the ribosome changes from the pre-translocational (PRE) to the post-translocational (POST) state as the newly formed A-site-bound peptidyl-tRNA and P-site-bound deacylated tRNA move to the P and E sites, respectively. Catalyzes the coordinated movement of the two tRNA molecules, the mRNA and conformational changes in the ribosome. This Mycobacterium tuberculosis (strain CDC 1551 / Oshkosh) protein is Elongation factor G (fusA).